Consider the following 505-residue polypeptide: Trans-cinnamate 4-monooxygenase (505 aa).

A helical membrane pass occupies residues 3-23 (LLLLEKTLLALFIAATIAITI). Residues 212 to 217 (RSRLAQ) and A305 contribute to the (E)-cinnamate site. C446 is a binding site for heme.

Belongs to the cytochrome P450 family. Requires heme as cofactor.

The protein localises to the membrane. The catalysed reaction is (E)-cinnamate + reduced [NADPH--hemoprotein reductase] + O2 = (E)-4-coumarate + oxidized [NADPH--hemoprotein reductase] + H2O + H(+). It participates in phenylpropanoid metabolism; trans-4-coumarate biosynthesis; trans-4-coumarate from trans-cinnamate: step 1/1. Its function is as follows. Catalyzes the first oxidative step of the phenylpropanoid pathway in higher plants by transforming trans-cinnamate into p-coumarate. The compounds formed by this pathway are essential components for lignification, pollination, and defense against ultraviolet light, predators and pathogens. This Cicer arietinum (Chickpea) protein is Trans-cinnamate 4-monooxygenase (CYP73A19).